A 136-amino-acid chain; its full sequence is Large-conductance mechanosensitive channel (136 aa).

Transmembrane regions (helical) follow at residues 15 to 35 (IDLA…NSIV), 38 to 58 (IFMP…MFIQ), and 80 to 100 (GHFI…FFFV).

Belongs to the MscL family. Homopentamer.

The protein resides in the cell inner membrane. Its function is as follows. Channel that opens in response to stretch forces in the membrane lipid bilayer. May participate in the regulation of osmotic pressure changes within the cell. The sequence is that of Large-conductance mechanosensitive channel from Bartonella tribocorum (strain CIP 105476 / IBS 506).